The chain runs to 561 residues: Potassium-transporting ATPase potassium-binding subunit (561 aa).

Helical transmembrane passes span 4 to 24, 65 to 85, 133 to 153, 177 to 197, 253 to 273, 285 to 305, 380 to 400, 417 to 437, 484 to 504, and 528 to 548; these read IVMQ…PLGI, AVSV…VLML, IGLT…LFAV, LYIL…QGVV, FTNL…VVMF, AIMT…TISE, GLYG…LLVG, MVCL…AVAV, MVGA…ALYL, and FIGL…LPAL.

Belongs to the KdpA family. The system is composed of three essential subunits: KdpA, KdpB and KdpC.

Its subcellular location is the cell membrane. Functionally, part of the high-affinity ATP-driven potassium transport (or Kdp) system, which catalyzes the hydrolysis of ATP coupled with the electrogenic transport of potassium into the cytoplasm. This subunit binds the extracellular potassium ions and delivers the ions to the membrane domain of KdpB through an intramembrane tunnel. The sequence is that of Potassium-transporting ATPase potassium-binding subunit from Listeria monocytogenes serotype 4b (strain F2365).